The chain runs to 249 residues: Mannose-binding protein A (249 aa).

Residues 1-20 (MLLFSSLPVLLLCVVTASYS) form the signal peptide. Residues 41–102 (VTNGTPGRDG…KGDPGDTSGV (62 aa)) are disordered. A compositionally biased stretch (basic and acidic residues) spans 48–60 (RDGRDGPKGEKGE). 4-hydroxyproline is present on Pro54. 5-hydroxylysine occurs at positions 55 and 58. O-linked (Gal...) hydroxylysine glycosylation is found at Lys55 and Lys58. 4-hydroxyproline occurs at positions 61, 72, 78, and 89. One can recognise a Collagen-like domain in the interval 64 to 98 (GFRGSQGPPGKMGPPGNIGETGPLGPKGQKGDPGD). 5-hydroxylysine is present on residues Lys90 and Lys93. Residues Lys90 and Lys93 are each glycosylated (O-linked (Gal...) hydroxylysine). The 112-residue stretch at 135 to 246 (SRKKLYVTNG…CSSSFLAVCE (112 aa)) folds into the C-type lectin domain. Intrachain disulfides connect Cys156–Cys245 and Cys223–Cys237. Asp189, Glu193, Glu213, Asn215, Asp216, Glu221, Asp222, Asn233, and Asp234 together coordinate Ca(2+). The tract at residues 213–221 (EPNDHGSGE) is calcium-dependent carbohydrate binding.

As to quaternary structure, interacts with MASP1 and MASP2. Forms oligomeric complexes of 3, 4, 5 or, predominantly, 6 homotrimers. The homotrimers appear as globular heads that are connected to a central hub by thin stalks. Hydroxylated on lysine and proline residues within the collagen-like domain. In terms of processing, O-glycosylated. O-linked glycans on hydroxylysine residues consist of Glc-Gal disaccharides bound to the oxygen atom of post-translationally added hydroxyl groups. In terms of tissue distribution, detected in blood serum (at protein level). Expressed in liver. Weakly expressed in lung, testis and brain. Not detected in bone marrow and heart.

The protein resides in the secreted. Functionally, calcium-dependent lectin. Plays a role in the innate immune response by binding mannose, fucose and N-acetylglucosamine on bacteria, including strains of A.suis, H.parasuis and A.pleuropneumoniae, and activates the lectin complement pathway. According to some authors, it only binds mannose. The protein is Mannose-binding protein A of Sus scrofa (Pig).